We begin with the raw amino-acid sequence, 35 residues long: Tau-theraphotoxin-Pc1b (35 aa).

Intrachain disulfides connect C3-C17, C10-C22, and C16-C29. Position 35 is a phenylalanine amide (F35).

The protein belongs to the neurotoxin 10 (Hwtx-1) family. 62 (Vatx) subfamily. As to expression, expressed by the venom gland.

Its subcellular location is the secreted. Functionally, selectively activates the mammalian capsaicin receptor TRPV1, a non-selective cation channel expressed by sensory neurons of the pain pathway. Is more potent than VaTx1, but less potent than VaTx3. Interacts with distinct regions of the channel than capsaicin, since it only acts on the extracellular face of the channel, and capsaicin binds to the cytosolic side. Also activates avian TRPV1, which is insensitive to capsaicin. Produce weak inhibition on potassium channels Kv2.1/KCNB1. This Psalmopoeus cambridgei (Trinidad chevron tarantula) protein is Tau-theraphotoxin-Pc1b.